A 141-amino-acid polypeptide reads, in one-letter code: 6,7-dimethyl-8-ribityllumazine synthase (141 aa).

5-amino-6-(D-ribitylamino)uracil is bound by residues phenylalanine 13, 45 to 47, and 69 to 71; these read SFE and AII. 74–75 contributes to the (2S)-2-hydroxy-3-oxobutyl phosphate binding site; that stretch reads DT. Catalysis depends on histidine 77, which acts as the Proton donor. Leucine 102 is a binding site for 5-amino-6-(D-ribitylamino)uracil. Arginine 117 lines the (2S)-2-hydroxy-3-oxobutyl phosphate pocket.

It belongs to the DMRL synthase family.

It catalyses the reaction (2S)-2-hydroxy-3-oxobutyl phosphate + 5-amino-6-(D-ribitylamino)uracil = 6,7-dimethyl-8-(1-D-ribityl)lumazine + phosphate + 2 H2O + H(+). Its pathway is cofactor biosynthesis; riboflavin biosynthesis; riboflavin from 2-hydroxy-3-oxobutyl phosphate and 5-amino-6-(D-ribitylamino)uracil: step 1/2. Its function is as follows. Catalyzes the formation of 6,7-dimethyl-8-ribityllumazine by condensation of 5-amino-6-(D-ribitylamino)uracil with 3,4-dihydroxy-2-butanone 4-phosphate. This is the penultimate step in the biosynthesis of riboflavin. This is 6,7-dimethyl-8-ribityllumazine synthase from Methanopyrus kandleri (strain AV19 / DSM 6324 / JCM 9639 / NBRC 100938).